The sequence spans 326 residues: Pyruvate dehydrogenase E1 component subunit alpha (326 aa).

In terms of assembly, heterodimer of an alpha and a beta chain. The cofactor is thiamine diphosphate.

It carries out the reaction N(6)-[(R)-lipoyl]-L-lysyl-[protein] + pyruvate + H(+) = N(6)-[(R)-S(8)-acetyldihydrolipoyl]-L-lysyl-[protein] + CO2. In terms of biological role, the pyruvate dehydrogenase complex catalyzes the overall conversion of pyruvate to acetyl-CoA and CO(2). It contains multiple copies of three enzymatic components: pyruvate dehydrogenase (E1), dihydrolipoamide acetyltransferase (E2) and lipoamide dehydrogenase (E3). This is Pyruvate dehydrogenase E1 component subunit alpha (pdhA) from Rickettsia prowazekii (strain Madrid E).